A 570-amino-acid polypeptide reads, in one-letter code: Proline--tRNA ligase (570 aa).

Belongs to the class-II aminoacyl-tRNA synthetase family. ProS type 1 subfamily. As to quaternary structure, homodimer.

It localises to the cytoplasm. The catalysed reaction is tRNA(Pro) + L-proline + ATP = L-prolyl-tRNA(Pro) + AMP + diphosphate. In terms of biological role, catalyzes the attachment of proline to tRNA(Pro) in a two-step reaction: proline is first activated by ATP to form Pro-AMP and then transferred to the acceptor end of tRNA(Pro). As ProRS can inadvertently accommodate and process non-cognate amino acids such as alanine and cysteine, to avoid such errors it has two additional distinct editing activities against alanine. One activity is designated as 'pretransfer' editing and involves the tRNA(Pro)-independent hydrolysis of activated Ala-AMP. The other activity is designated 'posttransfer' editing and involves deacylation of mischarged Ala-tRNA(Pro). The misacylated Cys-tRNA(Pro) is not edited by ProRS. The sequence is that of Proline--tRNA ligase from Shewanella sp. (strain ANA-3).